The following is a 232-amino-acid chain: Thiamine import ATP-binding protein ThiQ (232 aa).

The 229-residue stretch at 2–230 (LKLTDITWLY…KASASAILGI (229 aa)) folds into the ABC transporter domain. 32-39 (GPSGAGKS) is an ATP binding site.

Belongs to the ABC transporter superfamily. Thiamine importer (TC 3.A.1.19.1) family. The complex is composed of two ATP-binding proteins (ThiQ), two transmembrane proteins (ThiP) and a solute-binding protein (ThiB).

The protein localises to the cell inner membrane. The catalysed reaction is thiamine(out) + ATP + H2O = thiamine(in) + ADP + phosphate + H(+). In terms of biological role, part of the ABC transporter complex ThiBPQ involved in thiamine import. Responsible for energy coupling to the transport system. The polypeptide is Thiamine import ATP-binding protein ThiQ (Shigella flexneri serotype 5b (strain 8401)).